The chain runs to 420 residues: Type II methyltransferase M.NmeDI (420 aa).

The segment at 1-23 (MMSLKIQPAVPKKSDKPSATNRD) is disordered. The SAM-dependent MTase C5-type domain maps to 56-411 (TLIFSFFSGA…MTLKSYLENH (356 aa)). Residue cysteine 148 is part of the active site.

It belongs to the class I-like SAM-binding methyltransferase superfamily. C5-methyltransferase family.

It carries out the reaction a 2'-deoxycytidine in DNA + S-adenosyl-L-methionine = a 5-methyl-2'-deoxycytidine in DNA + S-adenosyl-L-homocysteine + H(+). Its function is as follows. A methylase that recognizes the double-stranded sequence 5'-RCCGGB-3', methylates C-2 on both strands, and protects the DNA from cleavage by the NmeDI endonuclease. The sequence is that of Type II methyltransferase M.NmeDI (nmeDIMP) from Neisseria meningitidis serogroup C.